Here is a 270-residue protein sequence, read N- to C-terminus: tRNA pseudouridine synthase A (270 aa).

The Nucleophile role is filled by Asp60. Tyr118 is a substrate binding site.

Belongs to the tRNA pseudouridine synthase TruA family. Homodimer.

It carries out the reaction uridine(38/39/40) in tRNA = pseudouridine(38/39/40) in tRNA. Formation of pseudouridine at positions 38, 39 and 40 in the anticodon stem and loop of transfer RNAs. In Salmonella typhimurium (strain LT2 / SGSC1412 / ATCC 700720), this protein is tRNA pseudouridine synthase A.